Consider the following 250-residue polypeptide: Protein lin-28 homolog B (250 aa).

Positions Met-1–Gln-26 are disordered. Residues Arg-29–Pro-102 form the CSD domain. A phosphoserine mark is found at Ser-54, Ser-96, Ser-105, and Ser-110. Residues Arg-98–Gly-126 are disordered. The Bipartite nuclear localization signal signature appears at Arg-112–Lys-125. The span at Pro-114–Lys-125 shows a compositional bias: basic residues. 2 CCHC-type zinc fingers span residues Asp-127 to Leu-144 and Lys-149 to His-166. 8 residues coordinate Zn(2+): Cys-129, Cys-132, His-137, Cys-142, Cys-151, Cys-154, His-159, and Cys-164. The disordered stretch occupies residues Val-169–Thr-250. Residues Pro-173–Leu-191 are compositionally biased toward polar residues. Ser-203 is modified (phosphoserine). Residues Ala-210–Gly-219 are compositionally biased toward basic and acidic residues. Residues Arg-220–Ser-231 are compositionally biased toward polar residues. Residues Lys-239–Thr-250 carry the Nucleolar localization signal motif.

The protein belongs to the lin-28 family. In terms of tissue distribution, expressed at high levels in the placenta and, at mucher lower, in testis and fetal liver. Isoform 1 is only detected in placenta and in moderately and poorly differentiated hepatocellular carcinoma cells (at protein level). Isoform 2 is detected in fetal liver, non-tumor liver tissues, as well as well-differentiated tumor tissues (at protein level). Tends to be up-regulated in triple-negative (ER-,PR-,HER2-) breast tumors, as well as in liver, ovarian, and thyroid carcinomas.

The protein resides in the nucleus. It localises to the nucleolus. It is found in the cytoplasm. Its function is as follows. Suppressor of microRNA (miRNA) biogenesis, including that of let-7 and possibly of miR107, miR-143 and miR-200c. Binds primary let-7 transcripts (pri-let-7), including pri-let-7g and pri-let-7a-1, and sequester them in the nucleolus, away from the microprocessor complex, hence preventing their processing into mature miRNA. Does not act on pri-miR21. The repression of let-7 expression is required for normal development and contributes to maintain the pluripotent state of embryonic stem cells by preventing let-7-mediated differentiation. When overexpressed, recruits ZCCHC11/TUT4 uridylyltransferase to pre-let-7 transcripts, leading to their terminal uridylation and degradation. This activity might not be relevant in vivo, as LIN28B-mediated inhibition of let-7 miRNA maturation appears to be ZCCHC11-independent. Interaction with target pre-miRNAs occurs via an 5'-GGAG-3' motif in the pre-miRNA terminal loop. Mediates MYC-induced let-7 repression. When overexpressed, isoform 1 stimulates growth of the breast adenocarcinoma cell line MCF-7. Isoform 2 has no effect on cell growth. This is Protein lin-28 homolog B (LIN28B) from Homo sapiens (Human).